A 522-amino-acid polypeptide reads, in one-letter code: UPF0288 protein MTH_1865 (522 aa).

Belongs to the UPF0288 family.

The chain is UPF0288 protein MTH_1865 from Methanothermobacter thermautotrophicus (strain ATCC 29096 / DSM 1053 / JCM 10044 / NBRC 100330 / Delta H) (Methanobacterium thermoautotrophicum).